We begin with the raw amino-acid sequence, 249 residues long: Coproheme decarboxylase (249 aa).

Fe-coproporphyrin III contacts are provided by residues arginine 131, tyrosine 145–lysine 149, histidine 172, and glutamine 185. Residue tyrosine 145 is part of the active site.

It belongs to the ChdC family. Type 1 subfamily. The cofactor is Fe-coproporphyrin III.

The catalysed reaction is Fe-coproporphyrin III + 2 H2O2 + 2 H(+) = heme b + 2 CO2 + 4 H2O. It catalyses the reaction Fe-coproporphyrin III + H2O2 + H(+) = harderoheme III + CO2 + 2 H2O. The enzyme catalyses harderoheme III + H2O2 + H(+) = heme b + CO2 + 2 H2O. It participates in porphyrin-containing compound metabolism; protoheme biosynthesis. Functionally, involved in coproporphyrin-dependent heme b biosynthesis. Catalyzes the decarboxylation of Fe-coproporphyrin III (coproheme) to heme b (protoheme IX), the last step of the pathway. The reaction occurs in a stepwise manner with a three-propionate intermediate. The polypeptide is Coproheme decarboxylase (Staphylococcus saprophyticus subsp. saprophyticus (strain ATCC 15305 / DSM 20229 / NCIMB 8711 / NCTC 7292 / S-41)).